Here is a 27-residue protein sequence, read N- to C-terminus: Chitinase 47 kDa (27 aa).

The GH18 domain maps to 3–27 (SKVVGYFTEWGTYDRKYYVKNIEXS).

The protein belongs to the glycosyl hydrolase 18 family. Chitinase class II subfamily. In terms of assembly, homodimer.

It catalyses the reaction Random endo-hydrolysis of N-acetyl-beta-D-glucosaminide (1-&gt;4)-beta-linkages in chitin and chitodextrins.. Able to cleave chitin oligomers from N=3 to 6. This Streptomyces olivaceoviridis (Streptomyces corchorusii) protein is Chitinase 47 kDa.